A 370-amino-acid polypeptide reads, in one-letter code: Putative L-lysine 2,3-aminomutase aq_454 (370 aa).

A Radical SAM core domain is found at 107–322 (HRYPDRVLLN…RGRLSGFGIP (216 aa)). Residues cysteine 121, cysteine 125, and cysteine 128 each contribute to the [4Fe-4S] cluster site. Lysine 334 bears the N6-(pyridoxal phosphate)lysine mark.

The protein belongs to the radical SAM superfamily. KamA family. Requires [4Fe-4S] cluster as cofactor. The cofactor is pyridoxal 5'-phosphate.

The protein is Putative L-lysine 2,3-aminomutase aq_454 of Aquifex aeolicus (strain VF5).